A 344-amino-acid chain; its full sequence is Phenylalanine--tRNA ligase alpha subunit (344 aa).

Glu-259 contacts Mg(2+).

The protein belongs to the class-II aminoacyl-tRNA synthetase family. Phe-tRNA synthetase alpha subunit type 1 subfamily. As to quaternary structure, tetramer of two alpha and two beta subunits. Mg(2+) is required as a cofactor.

The protein localises to the cytoplasm. It catalyses the reaction tRNA(Phe) + L-phenylalanine + ATP = L-phenylalanyl-tRNA(Phe) + AMP + diphosphate + H(+). The polypeptide is Phenylalanine--tRNA ligase alpha subunit (Petrotoga mobilis (strain DSM 10674 / SJ95)).